The primary structure comprises 470 residues: Acetyl-CoA decarbonylase/synthase complex subunit gamma (470 aa).

In terms of domain architecture, 4Fe-4S spans 1–62 (MKVKSPLEVY…DPKVKKKLEE (62 aa)). [4Fe-4S] cluster is bound by residues Cys-18, Cys-21, Cys-26, and Cys-43.

As to quaternary structure, heterodimer of delta and gamma chains. The ACDS complex is made up of alpha, epsilon, beta, gamma and delta chains with a probable stoichiometry of (alpha(2)epsilon(2))(4)-beta(8)-(gamma(1)delta(1))(8). Corrinoid is required as a cofactor. Requires [4Fe-4S] cluster as cofactor.

It catalyses the reaction 5,6,7,8-tetrahydrosarcinapterin + methyl-Co(III)-[corrinoid Fe-S protein] = 5-methyltetrahydrosarcinapterin + Co(I)-[corrinoid Fe-S protein] + H(+). Functionally, part of a complex that catalyzes the reversible cleavage of acetyl-CoA, allowing autotrophic growth from CO(2). This chain is Acetyl-CoA decarbonylase/synthase complex subunit gamma, found in Archaeoglobus fulgidus (strain ATCC 49558 / DSM 4304 / JCM 9628 / NBRC 100126 / VC-16).